We begin with the raw amino-acid sequence, 248 residues long: MAENGASQETTQVAKHQEVGHKSLLQSDALYQYILETSVYPREPEPMKELREITAKHPWNLMTTSADEGQFLNMLLKLINAKNTMEIGVYTGYSLLATALALPDDGKILAMDINRENYEIGLPVIQKAGVAHKIDFREGPALPVLDLMVEDKSNHGTYDFIFVDADKDNYINYHKRIIELVKVGGVIGYDNTLWNGSVVAPPDAPLRKYVRYYRDFVLELNKALAADPRIEICMLPVGDGITLCRRVS.

Lys-22 contributes to the substrate binding site. Residues Thr-64, Glu-86, 88 to 89 (GV), Ser-94, Asp-112, and Ala-141 each bind S-adenosyl-L-methionine. Asp-164 is a substrate binding site. An a divalent metal cation-binding site is contributed by Asp-164. An S-adenosyl-L-methionine-binding site is contributed by Asp-166. A divalent metal cation is bound by residues Asp-190 and Asn-191. Asn-195 contributes to the substrate binding site.

The protein belongs to the class I-like SAM-binding methyltransferase superfamily. Cation-dependent O-methyltransferase family. CCoAMT subfamily. It depends on a divalent metal cation as a cofactor. In terms of tissue distribution, mostly expressed in petal limbs and tubes, and, at low levels, in stems, roots and leaves.

Its subcellular location is the cytoplasm. It localises to the cytosol. The catalysed reaction is (E)-caffeoyl-CoA + S-adenosyl-L-methionine = (E)-feruloyl-CoA + S-adenosyl-L-homocysteine + H(+). It catalyses the reaction (E)-5-hydroxyferuloyl-CoA + S-adenosyl-L-methionine = (E)-sinapoyl-CoA + S-adenosyl-L-homocysteine + H(+). It functions in the pathway aromatic compound metabolism; phenylpropanoid biosynthesis. Involved in the production of floral volatile phenylpropanoids in flowers of fragrant cultivars (e.g. cv. Mitchell and cv. V26) from cinnamic acid, a common precursor with the anthocyanin biosynthesis pathway involved in flower pigmentation. Methylates caffeoyl-CoA to feruloyl-CoA, also able to methylate 5-hydroxyferuloyl-CoA. The protein is Caffeoyl-CoA O-methyltransferase 3 of Petunia hybrida (Petunia).